The primary structure comprises 504 residues: ATP synthase subunit alpha (504 aa).

Residue 171 to 178 (GDRQTGKT) participates in ATP binding.

The protein belongs to the ATPase alpha/beta chains family. In terms of assembly, F-type ATPases have 2 components, CF(1) - the catalytic core - and CF(0) - the membrane proton channel. CF(1) has five subunits: alpha(3), beta(3), gamma(1), delta(1), epsilon(1). CF(0) has three main subunits: a(1), b(2) and c(9-12). The alpha and beta chains form an alternating ring which encloses part of the gamma chain. CF(1) is attached to CF(0) by a central stalk formed by the gamma and epsilon chains, while a peripheral stalk is formed by the delta and b chains.

It localises to the cell inner membrane. It catalyses the reaction ATP + H2O + 4 H(+)(in) = ADP + phosphate + 5 H(+)(out). Its function is as follows. Produces ATP from ADP in the presence of a proton gradient across the membrane. The alpha chain is a regulatory subunit. This chain is ATP synthase subunit alpha, found in Helicobacter hepaticus (strain ATCC 51449 / 3B1).